The chain runs to 493 residues: Ectonucleotide pyrophosphatase/phosphodiesterase 2 (493 aa).

Topologically, residues 1 to 28 are cytoplasmic; that stretch reads MLLFEQPVDLEKNNEDDTNIKPFAISRH. A helical; Signal-anchor for type II membrane protein membrane pass occupies residues 29-45; sequence FLLKLLLCGIILIELLL. Topologically, residues 46–493 are extracellular; it reads YSKCPKPIDN…KTKKEKSLLQ (448 aa). 3 N-linked (GlcNAc...) asparagine glycosylation sites follow: N62, N69, and N112. The tract at residues 76-438 is phosphodiesterase; it reads TLTILISIDG…IGIMGTHGYN (363 aa). T127 functions as the Nucleophile in the catalytic mechanism. Residues N153 and N441 are each glycosylated (N-linked (GlcNAc...) asparagine).

The protein belongs to the nucleotide pyrophosphatase/phosphodiesterase family. In terms of processing, autophosphorylated as part of the catalytic cycle of phosphodiesterase/pyrophosphatase activity.

It is found in the membrane. It carries out the reaction Hydrolytically removes 5'-nucleotides successively from the 3'-hydroxy termini of 3'-hydroxy-terminated oligonucleotides.. The catalysed reaction is a ribonucleoside 5'-triphosphate + H2O = a ribonucleoside 5'-phosphate + diphosphate + H(+). The enzyme catalyses a 2'-deoxyribonucleoside 5'-triphosphate + H2O = a 2'-deoxyribonucleoside 5'-phosphate + diphosphate + H(+). Functionally, mediates extracellular nucleotide derived phosphate hydrolysis along with NPP1 and PHO5. The protein is Ectonucleotide pyrophosphatase/phosphodiesterase 2 (NPP2) of Saccharomyces cerevisiae (strain ATCC 204508 / S288c) (Baker's yeast).